The primary structure comprises 866 residues: Phospholipase D gamma 3 (866 aa).

The C2 domain occupies P31–F170. D232 provides a ligand contact to Ca(2+). The region spanning T371–R406 is the PLD phosphodiesterase 1 domain. Active-site residues include H376, K378, and D383. A 1,2-diacyl-sn-glycero-3-phosphate is bound at residue H376. Residues H412 and H444 each coordinate Ca(2+). Residue Q572 coordinates a 1,2-diacyl-sn-glycero-3-phosphate. Phosphoserine is present on S692. A PLD phosphodiesterase 2 domain is found at F712–S739. Residues H717, K719, and D724 contribute to the active site. H717 is a binding site for a 1,2-diacyl-sn-glycero-3-phosphate. E780 contributes to the Ca(2+) binding site.

Belongs to the phospholipase D family. C2-PLD subfamily. Ca(2+) serves as cofactor. In terms of tissue distribution, highly expressed in inflorescences and old leaves, moderately in stems, roots, siliques and young leaves and low in flowers.

It localises to the cytoplasm. The protein resides in the membrane. The enzyme catalyses a 1,2-diacyl-sn-glycero-3-phosphocholine + H2O = a 1,2-diacyl-sn-glycero-3-phosphate + choline + H(+). Inhibited by neomycin. Its function is as follows. Hydrolyzes glycerol-phospholipids at the terminal phosphodiesteric bond to generate phosphatidic acids (PA). Plays an important role in various cellular processes, including phytohormone action, vesicular trafficking, secretion, cytoskeletal arrangement, meiosis, tumor promotion, pathogenesis, membrane deterioration and senescence. Can use phosphatidylserine but prefers ethanolamine-containing lipids as substrates. The polypeptide is Phospholipase D gamma 3 (Arabidopsis thaliana (Mouse-ear cress)).